Reading from the N-terminus, the 199-residue chain is Twist-related protein 1 (199 aa).

Residues Met-1–Ser-18 are compositionally biased toward low complexity. The disordered stretch occupies residues Met-1–Glu-102. Residues Arg-34–Arg-43 show a composition bias toward basic residues. Composition is skewed to gly residues over residues Ala-46 to Glu-65 and Gly-80 to Ser-96. Positions Thr-105 to Leu-156 constitute a bHLH domain. The segment at Gln-158–Arg-188 is sufficient for transactivation activity.

As to quaternary structure, efficient DNA binding requires dimerization with another bHLH protein. Homodimer or heterodimer with E proteins such as TCF3. ID1 binds preferentially to TCF3 but does not interact efficiently with TWIST1 so ID1 levels control the amount of TCF3 available to dimerize with TWIST and thus determine the type of dimer formed.

The protein localises to the nucleus. In terms of biological role, acts as a transcriptional regulator. Inhibits myogenesis by sequestrating E proteins, inhibiting trans-activation by MEF2, and inhibiting DNA-binding by MYOD1 through physical interaction. This interaction probably involves the basic domains of both proteins. Also represses expression of pro-inflammatory cytokines such as TNFA and IL1B. Regulates cranial suture patterning and fusion. Activates transcription as a heterodimer with E proteins. Regulates gene expression differentially, depending on dimer composition. Homodimers induce expression of FGFR2 and POSTN while heterodimers repress FGFR2 and POSTN expression and induce THBS1 expression. Heterodimerization is also required for osteoblast differentiation. Represses the activity of the circadian transcriptional activator: NPAS2-BMAL1 heterodimer. The chain is Twist-related protein 1 (TWIST1) from Microcebus murinus (Gray mouse lemur).